We begin with the raw amino-acid sequence, 278 residues long: Urease accessory protein UreD 1 (278 aa).

Belongs to the UreD family. In terms of assembly, ureD, UreF and UreG form a complex that acts as a GTP-hydrolysis-dependent molecular chaperone, activating the urease apoprotein by helping to assemble the nickel containing metallocenter of UreC. The UreE protein probably delivers the nickel.

It is found in the cytoplasm. Its function is as follows. Required for maturation of urease via the functional incorporation of the urease nickel metallocenter. The chain is Urease accessory protein UreD 1 from Bradyrhizobium sp. (strain ORS 278).